The primary structure comprises 780 residues: Gelsolin (780 aa).

The first 25 residues, 1-25 (MAPYCSSLRSALLVLALCALSPSHA), serve as a signal peptide directing secretion. Positions 28 to 48 (ASRGRAQERAPQSRVSETRPS) are disordered. The actin-severing stretch occupies residues 51–174 (VVEHPEFLKA…YKKGGVASGF (124 aa)). Residues 74-155 (FDLVPVPPNL…EVQGFESSTF (82 aa)) form a Gelsolin-like 1 repeat. A Phosphotyrosine modification is found at Tyr84. The Ca(2+) site is built by Gly90, Asp91, Glu122, Asp134, Gly139, and Ala141. Residues 121–124 (DESG) form an actin-actin interfilament contact point region. 160–167 (KSGLKYKK) is an a 1,2-diacyl-sn-glycero-3-phospho-(1D-myo-inositol-4,5-bisphosphate) binding site. Ca(2+) is bound at residue Val170. Position 186–194 (186–194 (RLFQVKGRR)) interacts with a 1,2-diacyl-sn-glycero-3-phospho-(1D-myo-inositol-4,5-bisphosphate). Residues 196–268 (VRATEVPVSW…SEEGSEPEAM (73 aa)) form a Gelsolin-like 2 repeat. Ca(2+)-binding residues include Gly211 and Asp212. Cys213 and Cys226 are oxidised to a cystine. Residues Glu234, Asp284, Glu327, Asp328, and Glu352 each coordinate Ca(2+). The segment at 244 to 286 (GIRDNERSGRAQVHVSEEGSEPEAMLQVLGPKPDLPQGTEDTA) is disordered. Residues 315–387 (DENPFAQSAL…LPEGGETPLF (73 aa)) form a Gelsolin-like 3 repeat. 2 positions are modified to phosphotyrosine: Tyr407 and Tyr463. Residues 432–780 (AAQHGMDDDG…LDRALAELAA (349 aa)) are actin-binding, Ca-sensitive. A Gelsolin-like 4 repeat occupies 453–534 (SNKVLVDPAT…VQGKEPAHLM (82 aa)). Ca(2+) contacts are provided by Gly469, Asp470, Glu500, Asp512, Gly517, Pro519, and Thr549. Residues 576–640 (AVEVMPKAGA…EEGSEPDGFW (65 aa)) form a Gelsolin-like 5 repeat. Lys582 carries the post-translational modification N6-acetyllysine. Residues Asn589 and Asp590 each coordinate Ca(2+). The residue at position 601 (Tyr601) is a Phosphotyrosine. Residue Glu612 participates in Ca(2+) binding. Tyr649 carries the phosphotyrosine modification. Residues 679 to 754 (IEEVPGELMQ…VRQGFEPPSF (76 aa)) form a Gelsolin-like 6 repeat. Ca(2+) contacts are provided by Asp694, Asp695, and Glu717. Phosphothreonine is present on Thr740.

Belongs to the villin/gelsolin family. As to quaternary structure, binds to actin and to fibronectin. Identified in a complex composed of ACTA1, COBL, GSN and TMSB4X. Interacts with the inactive form of EIF2AK2/PKR. Interacts with FLII. In terms of processing, phosphorylated on tyrosine residues in vitro.

It is found in the secreted. The protein localises to the cytoplasm. The protein resides in the cytoskeleton. Functionally, calcium-regulated, actin-modulating protein that binds to the plus (or barbed) ends of actin monomers or filaments, preventing monomer exchange (end-blocking or capping). It can promote the assembly of monomers into filaments (nucleation) as well as sever filaments already formed. Plays a role in ciliogenesis. This chain is Gelsolin (Gsn), found in Rattus norvegicus (Rat).